The following is a 715-amino-acid chain: Palmitoyltransferase ZDHHC5 (715 aa).

Over 1–13 the chain is Cytoplasmic; sequence MPAESGKRFKPSK. The chain crosses the membrane as a helical span at residues 14–34; sequence YVPVSAAAIFLVGATTLFFAF. At 35–38 the chain is on the extracellular side; that stretch reads TCPG. A helical membrane pass occupies residues 39-59; it reads LSLCVSPAVPIYNAIVFLFVL. Residues 60-148 lie on the Cytoplasmic side of the membrane; the sequence is ANFSMATFMD…NCIGRRNYRY (89 aa). Tyrosine 91 is subject to Phosphotyrosine. The DHHC domain maps to 104–154; that stretch reads KWCATCRFYRPPRCSHCSVCDNCVEEFDHHCPWVNNCIGRRNYRYFFLFLL. The active-site S-palmitoyl cysteine intermediate is the cysteine 134. A helical transmembrane segment spans residues 149-169; the sequence is FFLFLLSLTAHIMGVFGFGLL. The Extracellular portion of the chain corresponds to 170-191; it reads YVLYHMEELSGVRTAVTMAVMC. A helical membrane pass occupies residues 192-212; sequence VAGLFFIPVAGLTGFHVVLVA. Residues 213 to 715 lie on the Cytoplasmic side of the membrane; sequence RGRTTNEQVT…VGGTTYEISV (503 aa). A phosphoserine mark is found at serine 247, serine 296, and serine 299. The segment at 289 to 648 is disordered; sequence GELRRSKSKG…SQKAPAGVSE (360 aa). Threonine 303 bears the Phosphothreonine mark. Serine 345 carries the phosphoserine modification. 2 positions are modified to phosphothreonine: threonine 348 and threonine 350. Low complexity predominate over residues 359 to 373; it reads SSSSTSAAMPHSSSA. 4 positions are modified to phosphoserine: serine 380, serine 398, serine 406, and serine 409. Threonine 411 carries the post-translational modification Phosphothreonine. Phosphoserine is present on residues serine 415, serine 425, serine 429, and serine 432. Residues 422–432 are compositionally biased toward low complexity; sequence SSGSRSSSLKS. Threonine 436 is subject to Phosphothreonine. Positions 442 to 478 are enriched in polar residues; that stretch reads QLQSIRSEGTTSTSYKSLANQTRNGSLSYDSLLTPSD. 2 positions are modified to phosphoserine: serine 529 and serine 554. Arginine 617 is subject to Omega-N-methylarginine. Residue serine 621 is modified to Phosphoserine. Position 659 is a phosphothreonine (threonine 659). Residues 666-715 form a disordered region; that stretch reads LKTAYSKSNGQPKSIGSASPGPGQQPLSSPTRGGVKKVSGVGGTTYEISV. A compositionally biased stretch (polar residues) spans 668-679; that stretch reads TAYSKSNGQPKS. Over residues 681–695 the composition is skewed to low complexity; sequence GSASPGPGQQPLSSP. Phosphoserine is present on residues serine 684 and serine 694. Arginine 697 is modified (omega-N-methylarginine).

Belongs to the DHHC palmitoyltransferase family. ERF2/ZDHHC9 subfamily. In terms of processing, phosphorylation regulates association with endocytic proteins and its subcellular localization. Phosphorylation by LYN during fatty acid uptake leads to inactivation of the activity. Autopalmitoylated. Palmitoylation of the C-terminal tail regulates stimulation-dependent plasma membrane motility.

It localises to the cell membrane. It carries out the reaction L-cysteinyl-[protein] + hexadecanoyl-CoA = S-hexadecanoyl-L-cysteinyl-[protein] + CoA. Palmitoyltransferase that catalyzes the addition of palmitate onto various protein substrates such as CTNND2, CD36, GSDMD, NLRP3, NOD1, NOD2, STAT3 and S1PR1 thus plays a role in various biological processes including cell adhesion, inflammation, fatty acid uptake, bacterial sensing or cardiac functions. Plays an important role in the regulation of synapse efficacy by mediating palmitoylation of delta-catenin/CTNND2, thereby increasing synaptic delivery and surface stabilization of alpha-amino-3-hydroxy-5-methyl-4-isoxazole propionic acid receptors (AMPARs). Under basal conditions, remains at the synaptic membrane through FYN-mediated phosphorylation that prevents association with endocytic proteins. Neuronal activity enhances the internalization and trafficking of DHHC5 from spines to dendritic shafts where it palmitoylates delta-catenin/CTNND2. Regulates cell adhesion at the plasma membrane by palmitoylating GOLGA7B and DSG2. Plays a role in innate immune response by mediating the palmitoylation of NOD1 and NOD2 and their proper recruitment to the bacterial entry site and phagosomes. Also participates in fatty acid uptake by palmitoylating CD36 and thereby targeting it to the plasma membrane. Upon binding of fatty acids to CD36, gets phosphorylated by LYN leading to inactivation and subsequent CD36 caveolar endocytosis. Controls oligodendrocyte development by catalyzing STAT3 palmitoylation. Acts as a regulator of inflammatory response by mediating palmitoylation of NLRP3 and GSDMD. Palmitoylates NLRP3 to promote inflammasome assembly and activation. Activates pyroptosis by catalyzing palmitoylation of gasdermin-D (GSDMD), thereby promoting membrane translocation and pore formation of GSDMD. This Canis lupus familiaris (Dog) protein is Palmitoyltransferase ZDHHC5 (ZDHHC5).